A 1483-amino-acid chain; its full sequence is Cystic fibrosis transmembrane conductance regulator (1483 aa).

Over 1-77 (MQRSPLEKAS…KLINALRRCF (77 aa)) the chain is Cytoplasmic. Residues 78–98 (FWKFMFYGILLYLGEVTKAVQ) traverse the membrane as a helical segment. The region spanning 81 to 365 (FMFYGILLYL…WAVQTWYDSL (285 aa)) is the ABC transmembrane type-1 1 domain. Over 99–122 (PLLLGRIIASYDPDNKVERSIAIY) the chain is Extracellular. A helical membrane pass occupies residues 123-146 (LGIGLCLLFVVRTLLLHPAIFGLH). The Cytoplasmic portion of the chain corresponds to 147 to 195 (HIGMQMRIAMFSLIYKKTLKLSSRVLDKISIGQLISLLSNNLNKFDEGL). A helical membrane pass occupies residues 196 to 216 (ALAHFVWIVPLQVTLLMGLLW). Topologically, residues 217–222 (ELLQAS) are extracellular. The helical transmembrane segment at 223–243 (AFCGLAFLIIVAFYQAGLGRM) threads the bilayer. Residues 244–298 (MMKYRDKRGGKINERLVITSEMIENIQSVKAYCWEEAMEKMIENLRQTELKLTRK) are Cytoplasmic-facing. A helical transmembrane segment spans residues 299 to 319 (AAYVRYCNSSAFFFSGFFVVF). Over 320 to 339 (LSVLPYALMKGIILRKIFTT) the chain is Extracellular. Residues 340-358 (ISFCIVLRMAVTRQFPWAV) traverse the membrane as a helical segment. At 359–859 (QTWYDSLGAI…YLRYITIHKS (501 aa)) the chain is on the cytoplasmic side. ATP-binding positions include tryptophan 401, serine 434, 458–465 (GSTGAGKT), and glutamine 493. The region spanning 423-646 (NGDNSLFFSN…RPDFSSKLMG (224 aa)) is the ABC transporter 1 domain. The S-palmitoyl cysteine moiety is linked to residue cysteine 524. Serine 549 and serine 660 each carry phosphoserine. The segment at 654-832 (SAERRNSILT…EEINEEDLKE (179 aa)) is disordered R region. Serine 670 carries the phosphoserine; by PKA modification. Serine 686 carries the post-translational modification Phosphoserine. Lysine 688 is covalently cross-linked (Glycyl lysine isopeptide (Lys-Gly) (interchain with G-Cter in ubiquitin)). Serine 700 and serine 712 each carry phosphoserine. Phosphothreonine is present on threonine 717. Serine 737, serine 768, serine 791, serine 796, and serine 814 each carry phosphoserine. A helical transmembrane segment spans residues 860–880 (LIFVLIWCLIIFLAEVAVSLV). The 298-residue stretch at 860 to 1157 (LIFVLIWCLI…AVNSSIDVDS (298 aa)) folds into the ABC transmembrane type-1 2 domain. Over 881–920 (FLLLFEKSPRQDTGNVTKSSNNSSYGVIITNTSSYYIIYI) the chain is Extracellular. Asparagine 895, asparagine 901, asparagine 902, and asparagine 911 each carry an N-linked (GlcNAc...) asparagine glycan. Residues 921 to 941 (YVGVADTLLALGLLRGLPLVH) form a discontinuously helical membrane-spanning segment. At 942–992 (TLITASKILHHKMLHSVLQAPMSTLNTLKAGGILNRFSKDIAILDDLLPLT) the chain is on the cytoplasmic side. A helical transmembrane segment spans residues 993 to 1013 (IFDFIQLILIVIGAVIVVSVL). Residues 1014-1015 (EP) lie on the Extracellular side of the membrane. The helical transmembrane segment at 1016–1036 (YIFLATVPVIIAFVMLRAYFL) threads the bilayer. At 1037-1097 (HTSQQLKQLE…TANWFLYLST (61 aa)) the chain is on the cytoplasmic side. The helical transmembrane segment at 1098–1118 (LRWFQMRIEMIFVIFFIAVTF) threads the bilayer. The Extracellular portion of the chain corresponds to 1119–1132 (ISILTTGDGEGRVG). Residues 1133 to 1153 (IILTLAMNIMNTLQWAVNSSI) form a helical membrane-spanning segment. The Cytoplasmic segment spans residues 1154-1483 (DVDSLMRSVS…TEEEVQETRL (330 aa)). The ABC transporter 2 domain maps to 1213–1446 (MTVKDLTAKY…KSLFRQAISN (234 aa)). Residues tyrosine 1222 and 1247-1254 (GRTGSGKS) each bind ATP. The tract at residues 1389–1483 (RTIKQAFADC…TEEEVQETRL (95 aa)) is interaction with GORASP2. Cysteine 1398 carries the S-palmitoyl cysteine lipid modification. Serine 1447 and serine 1459 each carry phosphoserine. Over residues 1455–1465 (HRNSSKHKSRS) the composition is skewed to basic residues. Residues 1455 to 1483 (HRNSSKHKSRSKIAALKEETEEEVQETRL) are disordered. A compositionally biased stretch (acidic residues) spans 1473–1483 (ETEEEVQETRL). A PDZ-binding motif is present at residues 1481–1483 (TRL).

The protein belongs to the ABC transporter superfamily. ABCC family. CFTR transporter (TC 3.A.1.202) subfamily. Monomer; does not require oligomerization for channel activity. May form oligomers in the membrane. Interacts with SLC26A3, SLC26A6 and NHERF1. Interacts with SHANK2. Interacts with MYO6. Interacts (via C-terminus) with GOPC (via PDZ domain); this promotes CFTR internalization and thereby decreases channel activity. Interacts with SLC4A7 through NHERF1. Found in a complex with MYO5B and RAB11A. Interacts with ANO1. Interacts with SLC26A8. Interacts with AHCYL1; the interaction increases CFTR activity. Interacts with CSE1L. The core-glycosylated form interacts with GORASP2 (via PDZ GRASP-type 1 domain) in respone to ER stress. Interacts with MARCHF2; the interaction leads to CFTR ubiqtuitination and degradation. Interacts with ADGRG2. N-glycosylated. In terms of processing, phosphorylated; cAMP treatment promotes phosphorylation and activates the channel. Dephosphorylation decreases the ATPase activity (in vitro). Phosphorylation at PKA sites activates the channel. Phosphorylation at PKC sites enhances the response to phosphorylation by PKA. Phosphorylated by AMPK; this inhibits channel activity. Post-translationally, ubiquitinated, leading to its degradation in the lysosome. Deubiquitination by USP10 in early endosomes enhances its endocytic recycling to the cell membrane. Ubiquitinated by RNF185 during ER stress. Ubiquitinated by MARCHF2.

The protein localises to the apical cell membrane. It is found in the early endosome membrane. Its subcellular location is the cell membrane. It localises to the recycling endosome membrane. The protein resides in the endoplasmic reticulum membrane. The protein localises to the nucleus. It catalyses the reaction ATP + H2O + closed Cl(-) channel = ADP + phosphate + open Cl(-) channel.. The enzyme catalyses chloride(in) = chloride(out). The catalysed reaction is hydrogencarbonate(in) = hydrogencarbonate(out). It carries out the reaction ATP + H2O = ADP + phosphate + H(+). Epithelial ion channel that plays an important role in the regulation of epithelial ion and water transport and fluid homeostasis. Mediates the transport of chloride ions across the cell membrane. The ion channel is also permeable to HCO(3)(-); selectivity depends on the extracellular chloride concentration. Exerts its function also by modulating the activity of other ion channels and transporters. Contributes to the regulation of the pH and the ion content of the epithelial fluid layer. Modulates the activity of the epithelial sodium channel (ENaC) complex, in part by regulating the cell surface expression of the ENaC complex. May regulate bicarbonate secretion and salvage in epithelial cells by regulating the transporter SLC4A7. Can inhibit the chloride channel activity of ANO1. Plays a role in the chloride and bicarbonate homeostasis during sperm epididymal maturation and capacitation. The protein is Cystic fibrosis transmembrane conductance regulator of Atelerix albiventris (Middle-African hedgehog).